Reading from the N-terminus, the 396-residue chain is MSSAALMEEIRNAQRAEGPATILAIGTATPANCVIQADYPDFYFRITNSEHKTELKEKFQRMCDKSMIKKRYMHLTEDLLKENPKMCEYMAPSLDARQDMVVVEIRKLGKEAAVKAIKEWGQPKSKITHLVFCTTSGVDMPGADYQLTKLLGLRPSVKRLMMYQQGCFPGGTVLRLAKDLAENNRGARVLVVCSEITAVTFRGPSDTHLDSLVGQALFGDGAAALIVGADPDTAIERPLFELVSAAQTILPDSDGAIDGHLREVGLTFHLLKDVPGLISKNIEKSLIEAFKPIGINDWNSIFWIAHPGGPAILDQVEHKLAPGRRANSRATRHILSEYGNMSSACVLFILDEMRKKSARRREATTGDGLEWGVLFGFGPGLTVETVVLHSVPAITA.

The active site involves Cys167.

It belongs to the thiolase-like superfamily. Chalcone/stilbene synthases family.

It catalyses the reaction (E)-4-coumaroyl-CoA + 3 malonyl-CoA + 3 H(+) = 2',4,4',6'-tetrahydroxychalcone + 3 CO2 + 4 CoA. It participates in secondary metabolite biosynthesis; flavonoid biosynthesis. The primary product of this enzyme is 4,2',4',6'-tetrahydroxychalcone (also termed naringenin-chalcone or chalcone) which can under specific conditions spontaneously isomerize into naringenin. The polypeptide is Chalcone synthase (CHS) (Chrysosplenium americanum (American golden saxifrage)).